An 88-amino-acid polypeptide reads, in one-letter code: Beta-defensin 115 (88 aa).

Positions 1–27 (MLPDHFSPLSGDIKLSVLALVVLVVLA) are cleaved as a signal peptide. Disulfide bonds link Cys38-Cys65, Cys45-Cys59, and Cys49-Cys66.

This sequence belongs to the beta-defensin family.

It is found in the secreted. In terms of biological role, has antibacterial activity. In Homo sapiens (Human), this protein is Beta-defensin 115 (DEFB115).